We begin with the raw amino-acid sequence, 202 residues long: Glycerol-3-phosphate acyltransferase (202 aa).

4 consecutive transmembrane segments (helical) span residues 1 to 21, 84 to 104, 116 to 136, and 143 to 163; these read MTLI…FGVL, AVAA…FLHF, ILLG…LAVA, and SLAA…FLGF.

This sequence belongs to the PlsY family. As to quaternary structure, probably interacts with PlsX.

Its subcellular location is the cell inner membrane. The catalysed reaction is an acyl phosphate + sn-glycerol 3-phosphate = a 1-acyl-sn-glycero-3-phosphate + phosphate. Its pathway is lipid metabolism; phospholipid metabolism. Catalyzes the transfer of an acyl group from acyl-phosphate (acyl-PO(4)) to glycerol-3-phosphate (G3P) to form lysophosphatidic acid (LPA). This enzyme utilizes acyl-phosphate as fatty acyl donor, but not acyl-CoA or acyl-ACP. This Nitrosospira multiformis (strain ATCC 25196 / NCIMB 11849 / C 71) protein is Glycerol-3-phosphate acyltransferase.